A 120-amino-acid polypeptide reads, in one-letter code: Large ribosomal subunit protein bL19 (120 aa).

The protein belongs to the bacterial ribosomal protein bL19 family.

In terms of biological role, this protein is located at the 30S-50S ribosomal subunit interface and may play a role in the structure and function of the aminoacyl-tRNA binding site. The chain is Large ribosomal subunit protein bL19 from Nostoc punctiforme (strain ATCC 29133 / PCC 73102).